The primary structure comprises 914 residues: DENN domain-containing protein 2C (914 aa).

Positions 46–98 are disordered; that stretch reads FGVRYNCHQESPPHKRPTGEERNGALPRNTDVKSRDQSEDEGEGGECRGSHPS. The span at 56 to 68 shows a compositional bias: basic and acidic residues; it reads SPPHKRPTGEERN. Phosphoserine is present on Ser-261. Residues 411-446 are disordered; sequence GKKRVKLQPYTGKEAPSSKGETSGNESDAEYLPKNR. The region spanning 480 to 627 is the uDENN domain; sequence ELFVVVSLQK…PFPAPGRTIT (148 aa). The region spanning 649–782 is the cDENN domain; sequence RLEHVDFECL…LQAALVQILE (134 aa). The dDENN domain occupies 784 to 874; sequence RDEVLAQEQQ…QDRELRQSGV (91 aa).

Its function is as follows. Guanine nucleotide exchange factor (GEF) which may activate RAB9A and RAB9B. Promotes the exchange of GDP to GTP, converting inactive GDP-bound Rab proteins into their active GTP-bound form. The polypeptide is DENN domain-containing protein 2C (Dennd2c) (Mus musculus (Mouse)).